A 429-amino-acid polypeptide reads, in one-letter code: 3-phosphoshikimate 1-carboxyvinyltransferase (429 aa).

The 3-phosphoshikimate site is built by K22, S23, and R27. Phosphoenolpyruvate is bound at residue K22. Positions 93 and 122 each coordinate phosphoenolpyruvate. Positions 168, 169, 170, 196, 311, and 338 each coordinate 3-phosphoshikimate. Q170 contributes to the phosphoenolpyruvate binding site. The active-site Proton acceptor is the D311. 2 residues coordinate phosphoenolpyruvate: R342 and R384.

The protein belongs to the EPSP synthase family. Monomer.

Its subcellular location is the cytoplasm. It carries out the reaction 3-phosphoshikimate + phosphoenolpyruvate = 5-O-(1-carboxyvinyl)-3-phosphoshikimate + phosphate. It participates in metabolic intermediate biosynthesis; chorismate biosynthesis. Functionally, catalyzes the transfer of the enolpyruvyl moiety of phosphoenolpyruvate (PEP) to the 5-hydroxyl of shikimate-3-phosphate (S3P) to produce enolpyruvyl shikimate-3-phosphate and inorganic phosphate. The chain is 3-phosphoshikimate 1-carboxyvinyltransferase from Methanocaldococcus jannaschii (strain ATCC 43067 / DSM 2661 / JAL-1 / JCM 10045 / NBRC 100440) (Methanococcus jannaschii).